The chain runs to 341 residues: MNTLVNILFIMIPLLFSVAYLVYFERKVIGAIQLRHGPSVVGPFGLLQPFADAIKLLVKEPIIPFRANTILFIMAPMLTFILALIVWAVIPFGAEVITENGQQIVIPKVIANVNIGVLYVLAISSLGIYGIIVAGWSSNSNYAFLGSIRSAAQMISYEVSMGLIVATVVITTGTLNLGEMVATKHSMPFWIDLLMMPIGVVFFISLLAETNRHPFDLPEAEAELVSGYNVEYSSMPFALFFLGEYANMILGSAMMTIFFLGGWYPPLKLSLLYKIPGLIWFVLKIVLLLFIFVWTRATIPRYRYDQLMRLGWKVFLPISVLWVILISGVLLFTGNLPGRGL.

8 helical membrane passes run 38–58 (PSVVGPFGLLQPFADAIKLLV), 70–90 (ILFIMAPMLTFILALIVWAVI), 115–135 (IGVLYVLAISSLGIYGIIVAG), 161–181 (MGLIVATVVITTGTLNLGEMV), 187–207 (MPFWIDLLMMPIGVVFFISLL), 239–259 (LFFLGEYANMILGSAMMTIFF), 275–295 (IPGLIWFVLKIVLLLFIFVWT), and 314–334 (VFLPISVLWVILISGVLLFTG).

It belongs to the complex I subunit 1 family. In terms of assembly, NDH-1 is composed of 14 different subunits. Subunits NuoA, H, J, K, L, M, N constitute the membrane sector of the complex.

The protein localises to the cell membrane. The catalysed reaction is a quinone + NADH + 5 H(+)(in) = a quinol + NAD(+) + 4 H(+)(out). Functionally, NDH-1 shuttles electrons from NADH, via FMN and iron-sulfur (Fe-S) centers, to quinones in the respiratory chain. The immediate electron acceptor for the enzyme in this species is believed to be ubiquinone. Couples the redox reaction to proton translocation (for every two electrons transferred, four hydrogen ions are translocated across the cytoplasmic membrane), and thus conserves the redox energy in a proton gradient. This subunit may bind ubiquinone. This Wolbachia sp. subsp. Brugia malayi (strain TRS) protein is NADH-quinone oxidoreductase subunit H.